The chain runs to 306 residues: Beta-lactamase 1 (306 aa).

Residues M1–K43 form the signal peptide. S89 acts as the Acyl-ester intermediate in catalysis. Residue E185 is the Proton acceptor of the active site. K251–G253 contributes to the substrate binding site.

This sequence belongs to the class-A beta-lactamase family.

It localises to the secreted. It carries out the reaction a beta-lactam + H2O = a substituted beta-amino acid. In terms of biological role, acts preferentially on penicillins. This Bacillus cereus protein is Beta-lactamase 1 (penPC).